A 490-amino-acid polypeptide reads, in one-letter code: Pyridine nucleotide-disulfide oxidoreductase domain-containing protein 1 (490 aa).

The protein belongs to the class-I pyridine nucleotide-disulfide oxidoreductase family. PYROXD1 subfamily. It depends on FAD as a cofactor.

The protein localises to the nucleus. The protein resides in the cytoplasm. It is found in the myofibril. It localises to the sarcomere. Functionally, probable FAD-dependent oxidoreductase; involved in the cellular oxidative stress response. Required for normal sarcomere structure and muscle fiber integrity. The polypeptide is Pyridine nucleotide-disulfide oxidoreductase domain-containing protein 1 (pyroxd1) (Danio rerio (Zebrafish)).